The chain runs to 128 residues: Small ribosomal subunit protein uS11 (128 aa).

Belongs to the universal ribosomal protein uS11 family. As to quaternary structure, part of the 30S ribosomal subunit. Interacts with proteins S7 and S18. Binds to IF-3.

In terms of biological role, located on the platform of the 30S subunit, it bridges several disparate RNA helices of the 16S rRNA. Forms part of the Shine-Dalgarno cleft in the 70S ribosome. The polypeptide is Small ribosomal subunit protein uS11 (Chloroherpeton thalassium (strain ATCC 35110 / GB-78)).